A 407-amino-acid polypeptide reads, in one-letter code: Lysosome-associated membrane glycoprotein 1 (407 aa).

The N-terminal stretch at 1–21 is a signal peptide; it reads MAAPGARRPLLLLLLAGLAHS. The interval 22-189 is first lumenal domain; it reads APALFEVKDN…SKEETRCPQD (168 aa). The Lumenal portion of the chain corresponds to 22–371; sequence APALFEVKDN…VEECVQDGNN (350 aa). Residues N32, N59, N71, N79, N102, N116, N125, N145, N160, and N178 are each glycosylated (N-linked (GlcNAc...) asparagine). The cysteines at positions 36 and 75 are disulfide-linked. Cysteines 150 and 186 form a disulfide. The tract at residues 180 to 211 is disordered; that stretch reads SKEETRCPQDQPSPTTGPPSPSPPLVPTNPSV. The segment at 190–219 is hinge; sequence QPSPTTGPPSPSPPLVPTNPSVSKYNVTGD. Over residues 194 to 206 the composition is skewed to pro residues; that stretch reads TTGPPSPSPPLVP. N-linked (GlcNAc...) asparagine glycosylation is found at N215, N220, N233, N241, N271, N283, N297, and N312. The segment at 220 to 371 is second lumenal domain; sequence NGTCLLASMA…VEECVQDGNN (152 aa). A disulfide bridge connects residues C223 and C260. An intrachain disulfide couples C328 to C365. The helical transmembrane segment at 372–395 threads the bilayer; sequence MLIPIAVGGALAGLVLIVLIAYLI. The Cytoplasmic portion of the chain corresponds to 396–407; it reads GRKRSHAGYQTI.

It belongs to the LAMP family. As to quaternary structure, interacts with ABCB9; this interaction strongly stabilizes ABCB9 and protects ABCB9 against lysosomal degradation. Interacts with FURIN. Interacts with TMEM175; inhibiting the proton channel activity of TMEM175. In terms of processing, O- and N-glycosylated; some of the N-glycans attached to LAMP-1 are polylactosaminoglycans.

It is found in the lysosome membrane. Its subcellular location is the endosome membrane. The protein resides in the late endosome membrane. It localises to the cell membrane. The protein localises to the cytolytic granule membrane. Lysosomal membrane glycoprotein which plays an important role in lysosome biogenesis, lysosomal pH regulation, autophagy and cholesterol homeostasis. Acts as an important regulator of lysosomal lumen pH regulation by acting as a direct inhibitor of the proton channel TMEM175, facilitating lysosomal acidification for optimal hydrolase activity. Also plays an important role in NK-cells cytotoxicity. Mechanistically, participates in cytotoxic granule movement to the cell surface and perforin trafficking to the lytic granule. In addition, protects NK-cells from degranulation-associated damage induced by their own cytotoxic granule content. Presents carbohydrate ligands to selectins. This is Lysosome-associated membrane glycoprotein 1 (Lamp1) from Rattus norvegicus (Rat).